We begin with the raw amino-acid sequence, 117 residues long: uncharacterized protein (117 aa).

This is an uncharacterized protein from Sinorhizobium fredii (strain NBRC 101917 / NGR234).